Here is a 133-residue protein sequence, read N- to C-terminus: FPRL1 inhibitory protein (133 aa).

An N-terminal signal peptide occupies residues 1-28 (MKKNITKTIIASTVIAAGLLTQTNDAKA).

Belongs to the CHIPS/FLIPr family.

It localises to the secreted. Its function is as follows. May be involved in countering the first line of host defense mechanisms. Impairs the leukocyte response to FPRL1 agonists by binding directly to host FPRL1. The protein is FPRL1 inhibitory protein (flr) of Staphylococcus aureus (strain USA300).